Reading from the N-terminus, the 312-residue chain is Deoxycytidylate deaminase (312 aa).

Positions 162–291 (SWDSYFMKLA…RMDEESFKVL (130 aa)) constitute a CMP/dCMP-type deaminase domain. Residue His-233 participates in Zn(2+) binding. The active-site Proton donor is Glu-235. Cys-260 and Cys-263 together coordinate Zn(2+).

It belongs to the cytidine and deoxycytidylate deaminase family. Zn(2+) is required as a cofactor.

The catalysed reaction is dCMP + H2O + H(+) = dUMP + NH4(+). Its activity is regulated as follows. Allosteric enzyme whose activity is greatly influenced by the end products of its metabolic pathway, dCTP and dTTP. Functionally, catalyzes the hydrolytic deamination of dCMP to yield dUMP, the nucleotide substrate for thymidylate synthetase. The chain is Deoxycytidylate deaminase from Saccharomyces cerevisiae (strain ATCC 204508 / S288c) (Baker's yeast).